Here is a 177-residue protein sequence, read N- to C-terminus: MDTTQVTLIHKILAAADERNLPLWIGGGWAIDARLGRVTRKHDDIDLTFPGERRGELEAIVEMLGGRVMEELDYGFLAEIGDELLDCEPAWWADEAYEIAEAPQGSCPEAAEGVIAGRPVRCNSWEAIIWDYFYYADEVPPVDWPTKHIESYRLACTSLGAEKVEVLRAAFRSRYAA.

The tract at residues 1 to 92 (MDTTQVTLIH…ELLDCEPAWW (92 aa)) is N-terminal domain. Mg(2+)-binding residues include Asp-44, Asp-46, and Asp-86. The Proton acceptor role is filled by Asp-86. Residues 93 to 177 (ADEAYEIAEA…RAAFRSRYAA (85 aa)) form a C-terminal domain region. Ala-100 provides a ligand contact to kanamycin A.

As to quaternary structure, monomer. The cofactor is Mg(2+).

It carries out the reaction nucleoside triphosphate + gentamicin = diphosphate + 2''-nucleotidylgentamicin.. In terms of biological role, mediates bacterial resistance to kanamycin, gentamicin, dibekacin, sisomicin and tobramycin by adenylating the 2''-hydroxyl group of these antibiotics. The sequence is that of 2''-aminoglycoside nucleotidyltransferase from Klebsiella pneumoniae.